We begin with the raw amino-acid sequence, 511 residues long: MLMDYEKERTERAERIRKGGAEKYHQSNREKGKLFVRERLSLLFDDDIELEDAFFAECMSDGLPADGVVTAIGKIGGQTVCVMANDSTVKAGSWGAKTVEKIIRIQEIAEKLNCPLIYLVDSAGARITDQINVFPGRRGAGRIFYNQVKLSGRIPQICLLFGPSAAGGAYIPAFCDIVVMVDGNASMYLGSPRMAEMVIGEKVSLEEMGGARMHCSISGCGDILAETEEEAIQLVRAYLSYFPANFQEKAPIHEKRPPKHFETPLADVIPQNQNAPFDMHELIERVIDEDSFFEIKALFAPELLTGLARIHGQPVGIVANQPKVKGGVLFHDSADKAAKFITLCDAFHIPLLFLADIPGFMIGTKVEQAGIIRHGAKMISAMSEATVPKLSVIVRKAYGAGLYAMAGPAFEPDCCLALPTAQIAVMGPEAAVNAVYAKKIAELPEEERAAFISSKREEYKEDINIYRLASEMIIDAVIPANSLRDELAKRLKAYMTKEMTFTNRKHPVYPV.

Residues leucine 2 to glutamate 254 form the CoA carboxyltransferase N-terminal domain. Residues leucine 2–histidine 506 are carboxyltransferase. Positions histidine 260 to histidine 506 constitute a CoA carboxyltransferase C-terminal domain.

It belongs to the AccD/PCCB family.

This is an uncharacterized protein from Bacillus subtilis (strain 168).